Reading from the N-terminus, the 413-residue chain is Tyrosine--tRNA ligase (413 aa).

Tyr-34 serves as a coordination point for L-tyrosine. Positions 39–48 (PTSHSLTVGH) match the 'HIGH' region motif. Tyr-164 and Gln-168 together coordinate L-tyrosine. The 'KMSKS' region signature appears at 225–229 (KFGKS). Lys-228 contacts ATP. In terms of domain architecture, S4 RNA-binding spans 347-413 (ILLVDALVQT…GKKNNALIVF (67 aa)).

This sequence belongs to the class-I aminoacyl-tRNA synthetase family. TyrS type 1 subfamily. Homodimer.

The protein resides in the cytoplasm. The enzyme catalyses tRNA(Tyr) + L-tyrosine + ATP = L-tyrosyl-tRNA(Tyr) + AMP + diphosphate + H(+). Functionally, catalyzes the attachment of tyrosine to tRNA(Tyr) in a two-step reaction: tyrosine is first activated by ATP to form Tyr-AMP and then transferred to the acceptor end of tRNA(Tyr). This is Tyrosine--tRNA ligase from Aster yellows witches'-broom phytoplasma (strain AYWB).